Here is a 591-residue protein sequence, read N- to C-terminus: Lipoprotein LpqB (591 aa).

The N-terminal stretch at 1 to 20 (MTLRPSRRAVLSAAAVLLTG) is a signal peptide. The N-palmitoyl cysteine moiety is linked to residue cysteine 21. Residue cysteine 21 is the site of S-diacylglycerol cysteine attachment.

It belongs to the LpqB lipoprotein family.

It localises to the cell membrane. This is Lipoprotein LpqB from Cutibacterium acnes (strain DSM 16379 / KPA171202) (Propionibacterium acnes).